The chain runs to 237 residues: Uracil-DNA glycosylase (237 aa).

The Proton acceptor role is filled by aspartate 77.

It belongs to the uracil-DNA glycosylase (UDG) superfamily. UNG family.

The protein resides in the cytoplasm. It catalyses the reaction Hydrolyzes single-stranded DNA or mismatched double-stranded DNA and polynucleotides, releasing free uracil.. In terms of biological role, excises uracil residues from the DNA which can arise as a result of misincorporation of dUMP residues by DNA polymerase or due to deamination of cytosine. This is Uracil-DNA glycosylase from Acinetobacter baumannii (strain AB307-0294).